A 1213-amino-acid polypeptide reads, in one-letter code: DNA-directed RNA polymerase subunit beta' (1213 aa).

Zn(2+) contacts are provided by Cys60, Cys62, Cys75, and Cys78. Mg(2+) is bound by residues Asp450, Asp452, and Asp454. Cys819, Cys893, Cys900, and Cys903 together coordinate Zn(2+).

It belongs to the RNA polymerase beta' chain family. The RNAP catalytic core consists of 2 alpha, 1 beta, 1 beta' and 1 omega subunit. When a sigma factor is associated with the core the holoenzyme is formed, which can initiate transcription. Requires Mg(2+) as cofactor. It depends on Zn(2+) as a cofactor.

The enzyme catalyses RNA(n) + a ribonucleoside 5'-triphosphate = RNA(n+1) + diphosphate. Functionally, DNA-dependent RNA polymerase catalyzes the transcription of DNA into RNA using the four ribonucleoside triphosphates as substrates. This is DNA-directed RNA polymerase subunit beta' from Streptococcus pyogenes serotype M18 (strain MGAS8232).